Here is a 227-residue protein sequence, read N- to C-terminus: Thymidine kinase (227 aa).

Residues 15-22 (GSMFSGKT) and 87-90 (DEAQ) contribute to the ATP site. Glu-88 acts as the Proton acceptor in catalysis. Zn(2+)-binding residues include Cys-144, Cys-147, Cys-176, and Cys-179. A disordered region spans residues 198–227 (RAVATDDADASTNEADPEAADAASADGTAA). Residues 217–227 (ADAASADGTAA) are compositionally biased toward low complexity.

The protein belongs to the thymidine kinase family. In terms of assembly, homotetramer.

The protein resides in the cytoplasm. It carries out the reaction thymidine + ATP = dTMP + ADP + H(+). This is Thymidine kinase from Salinibacter ruber (strain DSM 13855 / M31).